Here is a 482-residue protein sequence, read N- to C-terminus: GTPase Der (482 aa).

EngA-type G domains are found at residues 3-166 (PVVA…SEQF) and 195-368 (IKLA…NSAT). GTP is bound by residues 9–16 (GRPNVGKS), 56–60 (DTGGI), 118–121 (NKVD), 201–208 (GKPNVGKS), 248–252 (DTAGV), and 313–316 (NKWD). Positions 369–453 (KRINTSMLTR…PIKVEFREGA (85 aa)) constitute a KH-like domain.

The protein belongs to the TRAFAC class TrmE-Era-EngA-EngB-Septin-like GTPase superfamily. EngA (Der) GTPase family. In terms of assembly, associates with the 50S ribosomal subunit.

GTPase that plays an essential role in the late steps of ribosome biogenesis. This Pseudoalteromonas atlantica (strain T6c / ATCC BAA-1087) protein is GTPase Der.